Consider the following 333-residue polypeptide: Protein FanF (333 aa).

The signal sequence occupies residues 1–22 (MKNKYNLLFFLFLLCYGDVALA).

Three disulfide bonds are present.

The protein localises to the fimbrium. Minor component of K99 fimbriae. Is not required for binding of K99 fimbriae to the ganglioside receptor. May play a role in initiation, elongation and flexibility of the fimbriae. This chain is Protein FanF (fanF), found in Escherichia coli.